An 863-amino-acid polypeptide reads, in one-letter code: DNA mismatch repair protein MutS (863 aa).

ATP is bound at residue 617 to 624; it reads GPNMGGKS.

Belongs to the DNA mismatch repair MutS family.

In terms of biological role, this protein is involved in the repair of mismatches in DNA. It is possible that it carries out the mismatch recognition step. This protein has a weak ATPase activity. The protein is DNA mismatch repair protein MutS of Pseudomonas fluorescens (strain SBW25).